A 297-amino-acid polypeptide reads, in one-letter code: Acetyl-coenzyme A carboxylase carboxyl transferase subunit beta (297 aa).

Residues 1–23 are disordered; it reads MSWIERILGRTSSSSSSSKSKVP. Residues 26–295 form the CoA carboxyltransferase N-terminal domain; that stretch reads VWTKCTSCEQ…PFKTAELIVE (270 aa). Zn(2+) contacts are provided by Cys30, Cys33, Cys49, and Cys52. The segment at 30 to 52 adopts a C4-type zinc-finger fold; sequence CTSCEQVLYSEELKRNMHVCPKC.

It belongs to the AccD/PCCB family. In terms of assembly, acetyl-CoA carboxylase is a heterohexamer composed of biotin carboxyl carrier protein (AccB), biotin carboxylase (AccC) and two subunits each of ACCase subunit alpha (AccA) and ACCase subunit beta (AccD). The cofactor is Zn(2+).

The protein localises to the cytoplasm. The catalysed reaction is N(6)-carboxybiotinyl-L-lysyl-[protein] + acetyl-CoA = N(6)-biotinyl-L-lysyl-[protein] + malonyl-CoA. It participates in lipid metabolism; malonyl-CoA biosynthesis; malonyl-CoA from acetyl-CoA: step 1/1. Its function is as follows. Component of the acetyl coenzyme A carboxylase (ACC) complex. Biotin carboxylase (BC) catalyzes the carboxylation of biotin on its carrier protein (BCCP) and then the CO(2) group is transferred by the transcarboxylase to acetyl-CoA to form malonyl-CoA. This Actinobacillus pleuropneumoniae serotype 3 (strain JL03) protein is Acetyl-coenzyme A carboxylase carboxyl transferase subunit beta.